Consider the following 273-residue polypeptide: Type IV secretion system protein PtlF homolog (273 aa).

The signal sequence occupies residues 1–20 (MMAARMMAAGLAATALSAHA).

It belongs to the TrbG/VirB9 family.

It is found in the cell outer membrane. This Bordetella bronchiseptica (strain ATCC BAA-588 / NCTC 13252 / RB50) (Alcaligenes bronchisepticus) protein is Type IV secretion system protein PtlF homolog (ptlF).